Consider the following 89-residue polypeptide: MAHKKAGGSSRNGRDSQSKRLGVKKFGGEAVIAGNIIVRQRGTEWHPGTNVGLGKDHTIFALTAGNVNYRTKANGRVYVSVMPKAEAAE.

The segment at 1 to 21 (MAHKKAGGSSRNGRDSQSKRL) is disordered.

Belongs to the bacterial ribosomal protein bL27 family.

In Rhizobium rhizogenes (strain K84 / ATCC BAA-868) (Agrobacterium radiobacter), this protein is Large ribosomal subunit protein bL27.